The following is a 311-amino-acid chain: N-acetylmuramic acid 6-phosphate etherase (311 aa).

The SIS domain occupies 66–230 (VVEAFEADGR…TTAAMVRLGK (165 aa)). The active-site Proton donor is the glutamate 94. Glutamate 125 is a catalytic residue.

This sequence belongs to the GCKR-like family. MurNAc-6-P etherase subfamily. As to quaternary structure, homodimer.

The enzyme catalyses N-acetyl-D-muramate 6-phosphate + H2O = N-acetyl-D-glucosamine 6-phosphate + (R)-lactate. It functions in the pathway amino-sugar metabolism; N-acetylmuramate degradation. In terms of biological role, specifically catalyzes the cleavage of the D-lactyl ether substituent of MurNAc 6-phosphate, producing GlcNAc 6-phosphate and D-lactate. This is N-acetylmuramic acid 6-phosphate etherase from Salinibacter ruber (strain DSM 13855 / M31).